We begin with the raw amino-acid sequence, 54 residues long: Metallothionein-4 (54 aa).

The protein belongs to the metallothionein superfamily. Type 11 family.

The chain is Metallothionein-4 (MTP4) from Yarrowia lipolytica (strain CLIB 122 / E 150) (Yeast).